The chain runs to 370 residues: DNA replication and repair protein RecF (370 aa).

30 to 37 (GPNGSGKT) is a binding site for ATP.

It belongs to the RecF family.

It localises to the cytoplasm. The RecF protein is involved in DNA metabolism; it is required for DNA replication and normal SOS inducibility. RecF binds preferentially to single-stranded, linear DNA. It also seems to bind ATP. In Prosthecochloris aestuarii (strain DSM 271 / SK 413), this protein is DNA replication and repair protein RecF.